The following is a 260-amino-acid chain: UPF0246 protein Bcep1808_2308 (260 aa).

Belongs to the UPF0246 family.

This chain is UPF0246 protein Bcep1808_2308, found in Burkholderia vietnamiensis (strain G4 / LMG 22486) (Burkholderia cepacia (strain R1808)).